Here is a 306-residue protein sequence, read N- to C-terminus: Ribonuclease Z (306 aa).

Zn(2+) is bound by residues histidine 63, histidine 65, aspartate 67, histidine 68, histidine 141, aspartate 211, and histidine 269. Aspartate 67 acts as the Proton acceptor in catalysis.

Belongs to the RNase Z family. Homodimer. Requires Zn(2+) as cofactor.

It carries out the reaction Endonucleolytic cleavage of RNA, removing extra 3' nucleotides from tRNA precursor, generating 3' termini of tRNAs. A 3'-hydroxy group is left at the tRNA terminus and a 5'-phosphoryl group is left at the trailer molecule.. Its function is as follows. Zinc phosphodiesterase, which displays some tRNA 3'-processing endonuclease activity. Probably involved in tRNA maturation, by removing a 3'-trailer from precursor tRNA. The protein is Ribonuclease Z of Staphylococcus aureus (strain Mu3 / ATCC 700698).